Here is a 248-residue protein sequence, read N- to C-terminus: MAAITSWITDSGCKDHASLVSIAKLAEQAERYEDMAVAMKTIAEMGNELNNEERNLLSVAYKNVVGARRSSWRIMSSIAKKQAGTPLADQTDIYLKKVEEELTKICNDVLALLSKNLITEKIGAEAKIFYYKMMGDYYRYLAEVQEGEQNDKSTEAAEEAYQKATSLAEAELSVTHPIRLGLALNFSVFYYEIKNMPEKACSLAKAAFDAAITEVDSIKDETYKDSTLIMQLLRDNLTLWNSECETDS.

The protein belongs to the 14-3-3 family.

The polypeptide is 14-3-3 protein homolog 2 (Echinococcus multilocularis (Fox tapeworm)).